Here is a 416-residue protein sequence, read N- to C-terminus: FBD-associated F-box protein At3g52670 (416 aa).

Positions 9 to 62 (EDRMNQLPEDLILRILSFLPTELVIATSVLSKQWRSLWKLVPNLEFDSDDYESE) constitute an F-box domain. The region spanning 327 to 378 (KWNEPKYVPECLLSHLETFVWIRYDWEREEEKEVATYILRNARWLKKGTIST) is the FBD domain.

The chain is FBD-associated F-box protein At3g52670 from Arabidopsis thaliana (Mouse-ear cress).